The chain runs to 470 residues: Ubiquitin carboxyl-terminal hydrolase calypso (470 aa).

In terms of domain architecture, UCH catalytic spans 43-274 (GWLELESDPG…IRFNLMAVVP (232 aa)). The active-site Nucleophile is the Cys129. The active-site Proton donor is His211. The tract at residues 305–324 (DEQGEGGNGDPQRPDTPSTL) is disordered. Residues 373 to 401 (NYDKFICTFLSMLAHQGVLGELVSQHLLP) form the ULD domain. The positively charged C-terminal tail required for binding nucleosomes stretch occupies residues 403–470 (KKISGQSAAN…KGRNKCKKRK (68 aa)). The segment covering 422–451 (ANAGATAAGAAGAAPKSQQQQAAAAKNGKS) has biased composition (low complexity). The disordered stretch occupies residues 422–470 (ANAGATAAGAAGAAPKSQQQQAAAAKNGKSPSKTPGRRRKGRNKCKKRK). Residues 456–470 (PGRRRKGRNKCKKRK) are compositionally biased toward basic residues.

Belongs to the peptidase C12 family. BAP1 subfamily. Catalytic component of the polycomb repressive deubiquitinase (PR-DUB) complex, at least composed of caly/calypso, Asx and sba (MBD5/6 homolog). The PR-DUB complex associates with nucleosomes to mediate deubiquitination of histone H2AK118ub1 substrates; the association requires the positively charged C-terminal tail of caly, probably due to direct binding of DNA. Interacts (via ULD domain) with Asx (via DEUBAD domain); the interaction produces a stable heterodimer with a composite binding site for ubiquitin. Homodimerizes (via coiled-coil hinge-region between the UCH and ULD domains) to mediate assembly of 2 copies of the caly-Asx heterodimer into a bisymmetric tetramer; dimerization enhances PR-DUB association with nucleosomes.

Its subcellular location is the nucleus. It catalyses the reaction Thiol-dependent hydrolysis of ester, thioester, amide, peptide and isopeptide bonds formed by the C-terminal Gly of ubiquitin (a 76-residue protein attached to proteins as an intracellular targeting signal).. Catalytic component of the polycomb repressive deubiquitinase (PR-DUB) complex, a complex that specifically mediates deubiquitination of histone H2A monoubiquitinated at 'Lys-119' (H2AK118ub1). Mediates bisymmetric organization of the PR-DUB complex and is involved in association with nucleosomes to mediate deubiquitination. Does not deubiquitinate monoubiquitinated histone H2B. Required to maintain the transcriptionally repressive state of homeotic genes throughout development. The PR-DUB complex has weak or no activity toward 'Lys-48'- and 'Lys-63'-linked polyubiquitin chains. Polycomb group (PcG) protein. The protein is Ubiquitin carboxyl-terminal hydrolase calypso of Drosophila ananassae (Fruit fly).